Reading from the N-terminus, the 1909-residue chain is Receptor-type tyrosine-protein phosphatase F (1909 aa).

The N-terminal stretch at 1–31 is a signal peptide; that stretch reads MVPNTCTSVPLLPVGLPLLLLLSCIQFSSQA. Topologically, residues 32 to 1266 are extracellular; sequence DSLPNFVRSP…RSVDQPEMLW (1235 aa). Ig-like C2-type domains follow at residues 35–125, 137–225, and 233–315; these read PNFV…AKLT, PTID…ANLY, and PRFS…AQVS. Cysteine 56 and cysteine 109 form a disulfide bridge. Residue 68 to 77 participates in heparin binding; that stretch reads WMKKGKKVSS. A glycan (N-linked (GlcNAc...) asparagine) is linked at asparagine 119. The cysteines at positions 158 and 208 are disulfide-linked. Asparagine 251 and asparagine 296 each carry an N-linked (GlcNAc...) asparagine glycan. Cysteine 254 and cysteine 299 are disulfide-bonded. 8 Fibronectin type-III domains span residues 322-412, 417-511, 515-604, 609-706, 711-819, 820-914, 918-1013, and 1014-1098; these read PPTS…TGEQ, PPLH…TQQG, QPSS…TAQS, PPQD…TNED, PPRK…TTGA, VPGK…PEDV, FPLN…TSPA, and FATS…TAPD. The disordered stretch occupies residues 399 to 418; that stretch reads GPPSEPVETRTGEQAPSSPP. N-linked (GlcNAc...) asparagine glycosylation is present at asparagine 721. Asparagine 963 and asparagine 966 each carry an N-linked (GlcNAc...) asparagine glycan. The chain crosses the membrane as a helical span at residues 1267 to 1287; sequence VMGPVLAVVLIIIIVIAILLF. The Cytoplasmic portion of the chain corresponds to 1288–1909; that stretch reads KRKRASPLPK…YLGSFDHYAT (622 aa). Tyrosine-protein phosphatase domains lie at 1354-1609 and 1641-1900; these read FSQE…LLEA and MELE…ALEY. Residues aspartate 1518, 1550 to 1556, and glutamine 1594 contribute to the substrate site; that span reads CSAGVGR. The Phosphocysteine intermediate role is filled by cysteine 1550. The Phosphocysteine intermediate role is filled by cysteine 1841.

It belongs to the protein-tyrosine phosphatase family. Receptor class 2A subfamily.

It localises to the membrane. The enzyme catalyses O-phospho-L-tyrosyl-[protein] + H2O = L-tyrosyl-[protein] + phosphate. Possible cell adhesion receptor. It possesses an intrinsic protein tyrosine phosphatase activity (PTPase). Functionally, the first PTPase domain has enzymatic activity, while the second one seems to affect the substrate specificity of the first one. The chain is Receptor-type tyrosine-protein phosphatase F (ptprf) from Danio rerio (Zebrafish).